Consider the following 223-residue polypeptide: Deoxyribose-phosphate aldolase 2 (223 aa).

Residue Asp-89 is the Proton donor/acceptor of the active site. Lys-152 acts as the Schiff-base intermediate with acetaldehyde in catalysis. Lys-181 functions as the Proton donor/acceptor in the catalytic mechanism.

This sequence belongs to the DeoC/FbaB aldolase family. DeoC type 1 subfamily.

Its subcellular location is the cytoplasm. The enzyme catalyses 2-deoxy-D-ribose 5-phosphate = D-glyceraldehyde 3-phosphate + acetaldehyde. Its pathway is carbohydrate degradation; 2-deoxy-D-ribose 1-phosphate degradation; D-glyceraldehyde 3-phosphate and acetaldehyde from 2-deoxy-alpha-D-ribose 1-phosphate: step 2/2. Its function is as follows. Catalyzes a reversible aldol reaction between acetaldehyde and D-glyceraldehyde 3-phosphate to generate 2-deoxy-D-ribose 5-phosphate. The sequence is that of Deoxyribose-phosphate aldolase 2 from Bacillus licheniformis (strain ATCC 14580 / DSM 13 / JCM 2505 / CCUG 7422 / NBRC 12200 / NCIMB 9375 / NCTC 10341 / NRRL NRS-1264 / Gibson 46).